A 324-amino-acid polypeptide reads, in one-letter code: tRNA uridine(34) hydroxylase (324 aa).

Residues 145-239 enclose the Rhodanese domain; it reads NDKKTIFIDM…YVHDARKNGL (95 aa). The active-site Cysteine persulfide intermediate is the Cys-199.

This sequence belongs to the TrhO family.

The catalysed reaction is uridine(34) in tRNA + AH2 + O2 = 5-hydroxyuridine(34) in tRNA + A + H2O. In terms of biological role, catalyzes oxygen-dependent 5-hydroxyuridine (ho5U) modification at position 34 in tRNAs. This is tRNA uridine(34) hydroxylase from Buchnera aphidicola subsp. Acyrthosiphon pisum (strain APS) (Acyrthosiphon pisum symbiotic bacterium).